We begin with the raw amino-acid sequence, 169 residues long: Peptide deformylase (169 aa).

Fe cation is bound by residues C91 and H133. E134 is an active-site residue. H137 lines the Fe cation pocket.

The protein belongs to the polypeptide deformylase family. Fe(2+) serves as cofactor.

The enzyme catalyses N-terminal N-formyl-L-methionyl-[peptide] + H2O = N-terminal L-methionyl-[peptide] + formate. Removes the formyl group from the N-terminal Met of newly synthesized proteins. Requires at least a dipeptide for an efficient rate of reaction. N-terminal L-methionine is a prerequisite for activity but the enzyme has broad specificity at other positions. The sequence is that of Peptide deformylase from Serratia proteamaculans (strain 568).